Here is a 475-residue protein sequence, read N- to C-terminus: Squamosa promoter-binding-like protein 12 (475 aa).

The tract at residues 49 to 73 is disordered; sequence NHGSTNSSGGTFTSSSELANGSSKS. The span at 51-73 shows a compositional bias: low complexity; sequence GSTNSSGGTFTSSSELANGSSKS. Residues 177–254 form an SBP-type zinc finger; the sequence is SSYCQVEGCK…SDHNARRRKP (78 aa). Zn(2+)-binding residues include Cys180, Cys185, Cys202, His205, Cys221, Cys224, His228, and Cys240. The Bipartite nuclear localization signal signature appears at 237–253; that stretch reads KKSCRRRLSDHNARRRK. A disordered region spans residues 437–475; sequence GGGGFWQDGDDPPPLDHASQAQAFMHPGNGSSSGYGHLH. Residues 465 to 475 are compositionally biased toward polar residues; the sequence is NGSSSGYGHLH.

As to expression, expressed in young panicles.

It is found in the nucleus. Its function is as follows. Trans-acting factor that binds specifically to the consensus nucleotide sequence 5'-TNCGTACAA-3'. May be involved in panicle development. The polypeptide is Squamosa promoter-binding-like protein 12 (SPL12) (Oryza sativa subsp. indica (Rice)).